Reading from the N-terminus, the 1216-residue chain is Tyrosine-protein kinase receptor ver-4 (1216 aa).

Topologically, residues 1-789 are extracellular; it reads MRVSLTEFLV…VKVAGASSSS (789 aa). 16 N-linked (GlcNAc...) asparagine glycosylation sites follow: Asn142, Asn195, Asn206, Asn245, Asn283, Asn333, Asn348, Asn384, Asn402, Asn412, Asn496, Asn508, Asn588, Asn599, Asn664, and Asn703. Ig-like C2-type domains lie at 596–691 and 697–783; these read KSVN…TSIS and PPFL…VKVA. A disulfide bond links Cys619 and Cys675. Cys721 and Cys765 are oxidised to a cystine. Residues 790 to 810 traverse the membrane as a helical segment; that stretch reads FFWLFITFFAFVVVGIVVSLL. The Cytoplasmic portion of the chain corresponds to 811 to 1216; that stretch reads WKLFGQKDLK…WVQKPTQLFF (406 aa). The Protein kinase domain occupies 870-1181; the sequence is LEILETLGSG…IKLFKNHIQY (312 aa). Residues 876 to 884 and Lys908 each bind ATP; that span reads LGSGQFGIV. The active-site Proton acceptor is Asp1042.

The protein belongs to the protein kinase superfamily. Tyr protein kinase family.

The protein localises to the cell membrane. It carries out the reaction L-tyrosyl-[protein] + ATP = O-phospho-L-tyrosyl-[protein] + ADP + H(+). In terms of biological role, receptor tyrosine kinase which may be involved, downstream of pvf-1, in the positioning of ray 1, the most anterior ray sensillum in the male tail. The polypeptide is Tyrosine-protein kinase receptor ver-4 (Caenorhabditis elegans).